A 151-amino-acid polypeptide reads, in one-letter code: UPF0178 protein Caul_3070 (151 aa).

The protein belongs to the UPF0178 family.

This chain is UPF0178 protein Caul_3070, found in Caulobacter sp. (strain K31).